Reading from the N-terminus, the 133-residue chain is Oocytes ribonuclease (133 aa).

An N-terminal signal peptide occupies residues 1-22 (MCAKSLLLVFGILLGLSHLSLS). At Q23 the chain carries Pyrrolidone carboxylic acid. H32 serves as the catalytic Proton acceptor. Cystine bridges form between C41–C93, C56–C103, C74–C118, and C115–C132. 57-61 (KRVNT) is a substrate binding site. H125 acts as the Proton donor in catalysis.

The protein belongs to the pancreatic ribonuclease family. Monomer.

It is found in the secreted. Preferentially cleaves single-stranded RNA at pyrimidine residues with a 3'flanking guanine. Hydrolyzes poly(U) and poly(C) as substrates, and prefers the former. The S-lectins in frog eggs may be involved in the fertilization and development of the frog embryo. This lectin agglutinates various animal cells, including normal lymphocytes, erythrocytes, and fibroblasts of animal and human origin. It is cytotoxic against several tumor cells. The sequence is that of Oocytes ribonuclease (RCR) from Aquarana catesbeiana (American bullfrog).